We begin with the raw amino-acid sequence, 300 residues long: 2-dehydropantoate 2-reductase (300 aa).

Residues 7-12 (GAGAIG), K74, N99, and A123 contribute to the NADP(+) site. K179 acts as the Proton donor in catalysis. Residues K179, N183, N187, N197, and 246 to 249 (NYNS) each bind substrate. An NADP(+)-binding site is contributed by E261.

It belongs to the ketopantoate reductase family.

The protein localises to the cytoplasm. It catalyses the reaction (R)-pantoate + NAD(+) = 2-dehydropantoate + NADH + H(+). It carries out the reaction (R)-pantoate + NADP(+) = 2-dehydropantoate + NADPH + H(+). It participates in cofactor biosynthesis; coenzyme A biosynthesis. Catalyzes the NAD(P)H-dependent reduction of ketopantoate into pantoic acid. This Pyrococcus abyssi (strain GE5 / Orsay) protein is 2-dehydropantoate 2-reductase (apbA).